We begin with the raw amino-acid sequence, 89 residues long: Small ribosomal subunit protein uS15 (89 aa).

The protein belongs to the universal ribosomal protein uS15 family. As to quaternary structure, part of the 30S ribosomal subunit. Forms a bridge to the 50S subunit in the 70S ribosome, contacting the 23S rRNA.

In terms of biological role, one of the primary rRNA binding proteins, it binds directly to 16S rRNA where it helps nucleate assembly of the platform of the 30S subunit by binding and bridging several RNA helices of the 16S rRNA. Functionally, forms an intersubunit bridge (bridge B4) with the 23S rRNA of the 50S subunit in the ribosome. The protein is Small ribosomal subunit protein uS15 of Janthinobacterium sp. (strain Marseille) (Minibacterium massiliensis).